The following is a 74-amino-acid chain: Protein krueppel (74 aa).

4 consecutive C2H2-type zinc fingers follow at residues 1–4 (ERTH), 10–32 (FECP…MRLH), 38–60 (YHCS…LRVH), and 66–74 (YTCEICDGK).

Belongs to the krueppel C2H2-type zinc-finger protein family.

It localises to the nucleus. Its function is as follows. Krueppel is a gap class segmentation protein. The polypeptide is Protein krueppel (Kr) (Musca domestica (House fly)).